A 673-amino-acid polypeptide reads, in one-letter code: Putative lipase atg15 (673 aa).

Residues 1–7 (MPRKRSR) lie on the Cytoplasmic side of the membrane. A helical; Signal-anchor for type II membrane protein transmembrane segment spans residues 8-28 (FELSIHSLLLSVAVLSGAAYA). The Lumenal portion of the chain corresponds to 29 to 673 (SGYYPPSQQV…AVTSAPTPTS (645 aa)). N-linked (GlcNAc...) asparagine glycans are attached at residues N156, N191, N213, N271, and N295. The active-site Charge relay system is the S311. N457 is a glycosylation site (N-linked (GlcNAc...) asparagine).

The protein belongs to the AB hydrolase superfamily. Lipase family. Binds to both phosphatidylinositol (PI) and phosphatidylinositol 3,5-bisphosphate (PIP2).

It localises to the endosome. The protein resides in the multivesicular body membrane. Its subcellular location is the prevacuolar compartment membrane. The catalysed reaction is a triacylglycerol + H2O = a diacylglycerol + a fatty acid + H(+). Lipase which is essential for lysis of subvacuolar cytoplasm to vacuole targeted bodies and intravacuolar autophagic bodies. Involved in the lysis of intravacuolar multivesicular body (MVB) vesicles. The intravacuolar membrane disintegration by atg15 is critical to life span extension. This Penicillium rubens (strain ATCC 28089 / DSM 1075 / NRRL 1951 / Wisconsin 54-1255) (Penicillium chrysogenum) protein is Putative lipase atg15 (atg15).